A 95-amino-acid chain; its full sequence is Protein RnfH (95 aa).

The protein belongs to the UPF0125 (RnfH) family.

The protein is Protein RnfH of Erwinia tasmaniensis (strain DSM 17950 / CFBP 7177 / CIP 109463 / NCPPB 4357 / Et1/99).